Here is a 101-residue protein sequence, read N- to C-terminus: DNA-binding protein Fis (101 aa).

Residues glutamine 77–lysine 96 constitute a DNA-binding region (H-T-H motif).

It belongs to the transcriptional regulatory Fis family. As to quaternary structure, homodimer.

In terms of biological role, activates ribosomal RNA transcription. Plays a direct role in upstream activation of rRNA promoters. In Shewanella amazonensis (strain ATCC BAA-1098 / SB2B), this protein is DNA-binding protein Fis.